The following is a 1012-amino-acid chain: Beta-alanine-activating enzyme (1012 aa).

ATP is bound by residues 177-185 (TTGTTGKPK), D411, R426, and K516.

This sequence belongs to the ATP-dependent AMP-binding enzyme family.

In terms of biological role, covalently binds beta-alanine in an ATP-dependent manner to form a thioester bond with its phosphopantetheine group and transfers it to an, as yet, unknown acceptor. May be required for a post-translational protein modification or for post-transcriptional modification of an RNA. This chain is Beta-alanine-activating enzyme, found in Drosophila melanogaster (Fruit fly).